The following is a 1390-amino-acid chain: DNA-directed RNA polymerase subunit beta'' (1390 aa).

Residues Cys220, Cys291, Cys298, and Cys301 each contribute to the Zn(2+) site.

It belongs to the RNA polymerase beta' chain family. RpoC2 subfamily. In plastids the minimal PEP RNA polymerase catalytic core is composed of four subunits: alpha, beta, beta', and beta''. When a (nuclear-encoded) sigma factor is associated with the core the holoenzyme is formed, which can initiate transcription. Zn(2+) is required as a cofactor.

It is found in the plastid. The protein localises to the chloroplast. It catalyses the reaction RNA(n) + a ribonucleoside 5'-triphosphate = RNA(n+1) + diphosphate. DNA-dependent RNA polymerase catalyzes the transcription of DNA into RNA using the four ribonucleoside triphosphates as substrates. The chain is DNA-directed RNA polymerase subunit beta'' from Populus alba (White poplar).